The following is a 183-amino-acid chain: Beta-defensin 129 (183 aa).

The N-terminal stretch at 1 to 19 is a signal peptide; that stretch reads MKLLFPIFASLMLQYQVNT. Cystine bridges form between C27–C53, C34–C48, and C38–C54. Residues 141–183 form a disordered region; it reads TATSTKSNTKESRDSATASPPPAPPPPNILPTPSLELEEAEEQ. Positions 159–170 are enriched in pro residues; it reads SPPPAPPPPNIL.

Belongs to the beta-defensin family.

The protein localises to the secreted. Has antibacterial activity. This Pan troglodytes (Chimpanzee) protein is Beta-defensin 129 (DEFB129).